A 587-amino-acid polypeptide reads, in one-letter code: Vesicular glutamate transporter 2.2 (587 aa).

Topologically, residues 1 to 71 (MDTVKERVLA…CTCFGLPRRY (71 aa)) are cytoplasmic. A helical transmembrane segment spans residues 72–92 (IIAIMSGLGFCISFGIRCNLG). The Vesicular segment spans residues 93–125 (VAIVDMVNNSTIHKGGKIIIKGKAKFNWDPETV). N-linked (GlcNAc...) asparagine glycosylation is found at Asn100 and Asn101. A helical transmembrane segment spans residues 126 to 146 (GMIHGSFFWGYTVTQIPGGYI). Topologically, residues 147 to 149 (SSR) are cytoplasmic. A helical membrane pass occupies residues 150-170 (LAANRVFGAAILLTSTLNMFI). Topologically, residues 171 to 180 (PSAARVHYGC) are vesicular. Residues 181 to 203 (VMFVRILQGLVEGVTYPACHGIW) form a helical membrane-spanning segment. Over 204-217 (SKWAPPLERSRLAT) the chain is Cytoplasmic. The helical transmembrane segment at 218-238 (TSFCGSYAGAVVAMPLAGILV) threads the bilayer. The Vesicular segment spans residues 239–245 (QYSGWSS). A helical membrane pass occupies residues 246-266 (VFYIYGSFGIVWYMFWILVSY). Topologically, residues 267 to 311 (ESPADHPTITDEERTYIEESIGESAKLLGAMEKYKTPWRKFFTSM) are cytoplasmic. A helical membrane pass occupies residues 312 to 332 (PVYAIIVANFCRSWTFYLLLI). The Vesicular portion of the chain corresponds to 333 to 350 (SQPAYFEEVFGFEISKVG). The chain crosses the membrane as a helical span at residues 351–371 (MVSALPHLVMTIIVPIGGQLA). Topologically, residues 372-387 (DYLRSKNILTTTTVRK) are cytoplasmic. The helical transmembrane segment at 388 to 408 (IMNCGGFGMEATLLLVVGFSH) threads the bilayer. Residues 409 to 410 (SK) are Vesicular-facing. Residues 411–431 (GVAISFLVLAVGFSGFAISGF) form a helical membrane-spanning segment. The Cytoplasmic portion of the chain corresponds to 432–444 (NVNHLDIAPRYAS). A helical membrane pass occupies residues 445 to 465 (ILMGISNGVGTLSGMVCPLIV). Residues 466 to 479 (GAMTKNKTREEWQN) lie on the Vesicular side of the membrane. A glycan (N-linked (GlcNAc...) asparagine) is linked at Asn471. A helical membrane pass occupies residues 480–500 (VFLIASLVHYGGVIFYGIFAS). Over 501 to 587 (GEKQPWADPE…ERTYTGDGYS (87 aa)) the chain is Cytoplasmic.

The protein belongs to the major facilitator superfamily. Sodium/anion cotransporter family. VGLUT subfamily. Expressed in spinal cord.

It localises to the cytoplasmic vesicle. The protein resides in the secretory vesicle. Its subcellular location is the synaptic vesicle membrane. The protein localises to the membrane. It is found in the synapse. It localises to the synaptosome. The protein resides in the cell membrane. It catalyses the reaction L-glutamate(out) = L-glutamate(in). It carries out the reaction 3 Na(+)(out) + phosphate(out) = 3 Na(+)(in) + phosphate(in). The catalysed reaction is phosphate(in) = phosphate(out). The enzyme catalyses K(+)(in) + H(+)(out) = K(+)(out) + H(+)(in). It catalyses the reaction chloride(in) = chloride(out). Its activity is regulated as follows. Chloride channel activity is allosterically activated by lumenal H(+) and Cl(-) leading to synaptic vesicles acidification. The L-glutamate transport activity is allosterically activated by lumenal H(+) and Cl(-). The allosteric requirement for H(+) efficiently prevents non-vesicular efflux across the plasma membrane. The L-glutamate uniporter activity exhibits a biphasic dependence on chloride concentration. Functionally, multifunctional transporter that transports L-glutamate as well as multiple ions such as chloride, proton, potassium, sodium and phosphate. At the synaptic vesicle membrane, mainly functions as a uniporter which transports preferentially L-glutamate but also, phosphate from the cytoplasm into synaptic vesicles at presynaptic nerve terminals of excitatory neural cells. The L-glutamate or phosphate uniporter activity is electrogenic and is driven by the proton electrochemical gradient, mainly by the electrical gradient established by the vacuolar H(+)-ATPase across the synaptic vesicle membrane. In addition, functions as a chloride channel that allows a chloride permeation through the synaptic vesicle membrane therefore affects the proton electrochemical gradient and promotes synaptic vesicles acidification. Moreover, functions as a vesicular K(+)/H(+) antiport allowing to maintain the electrical gradient and to decrease chemical gradient and therefore sustain vesicular L-glutamate uptake. The vesicular H(+)/H(+) antiport activity is electroneutral. At the plasma membrane, following exocytosis, functions as a symporter of Na(+) and phosphate from the extracellular space to the cytoplasm allowing synaptic phosphate homeostasis regulation. The symporter activity is driven by an inside negative membrane potential and is electrogenic. Also involved in the regulation of retinal hyaloid vessel regression during postnatal development. May also play a role in the endocrine L-glutamatergic system of other tissues such as pineal gland and pancreas. The protein is Vesicular glutamate transporter 2.2 (slc17a6a) of Danio rerio (Zebrafish).